A 76-amino-acid polypeptide reads, in one-letter code: Sec-independent protein translocase protein TatA (76 aa).

Residues 1 to 21 (MLGGLTGWHLLIILAVILLLF) form a helical membrane-spanning segment. Basic and acidic residues predominate over residues 44-57 (VNEMKKDGDKDKGE). The disordered stretch occupies residues 44–76 (VNEMKKDGDKDKGEGGSTAPATDTGASSEQNSK). The span at 62–76 (APATDTGASSEQNSK) shows a compositional bias: polar residues.

Belongs to the TatA/E family. The Tat system comprises two distinct complexes: a TatABC complex, containing multiple copies of TatA, TatB and TatC subunits, and a separate TatA complex, containing only TatA subunits. Substrates initially bind to the TatABC complex, which probably triggers association of the separate TatA complex to form the active translocon.

The protein resides in the cell membrane. Part of the twin-arginine translocation (Tat) system that transports large folded proteins containing a characteristic twin-arginine motif in their signal peptide across membranes. TatA could form the protein-conducting channel of the Tat system. This chain is Sec-independent protein translocase protein TatA, found in Leifsonia xyli subsp. xyli (strain CTCB07).